The sequence spans 317 residues: Hairy/enhancer-of-split related with YRPW motif protein 1 (317 aa).

Residues 1-59 (MKRNHDFSSSDSELDENIEVEKESADENAGANSPLGSMSPSTTSQVQARKRRRGIIEKR) are disordered. Residues 30-47 (GANSPLGSMSPSTTSQVQ) are compositionally biased toward polar residues. In terms of domain architecture, bHLH spans 48–103 (ARKRRRGIIEKRRRDRINNSLSELRRLVPSAFEKQGSAKLEKAEILQMTVDHLKML). Residues 121-157 (YRGLGFRECLAETARYLSIIEGLDNTDPLRIRLVSHL) form the Orange domain. Composition is skewed to low complexity over residues 193-226 (QQQQ…SAPS) and 248-264 (PPST…TASK). Positions 193–264 (QQQQQQGAPL…PGLTPPTASK (72 aa)) are disordered. A YRPW motif motif is present at residues 307-310 (YRPW).

The protein belongs to the HEY family.

It is found in the nucleus. In terms of biological role, transcriptional repressor which functions as a downstream effector of Notch signaling. The protein is Hairy/enhancer-of-split related with YRPW motif protein 1 (hey1) of Danio rerio (Zebrafish).